The primary structure comprises 245 residues: 1-(5-phosphoribosyl)-5-[(5-phosphoribosylamino)methylideneamino] imidazole-4-carboxamide isomerase (245 aa).

Residue D7 is the Proton acceptor of the active site. D129 functions as the Proton donor in the catalytic mechanism.

Belongs to the HisA/HisF family.

Its subcellular location is the cytoplasm. The catalysed reaction is 1-(5-phospho-beta-D-ribosyl)-5-[(5-phospho-beta-D-ribosylamino)methylideneamino]imidazole-4-carboxamide = 5-[(5-phospho-1-deoxy-D-ribulos-1-ylimino)methylamino]-1-(5-phospho-beta-D-ribosyl)imidazole-4-carboxamide. The protein operates within amino-acid biosynthesis; L-histidine biosynthesis; L-histidine from 5-phospho-alpha-D-ribose 1-diphosphate: step 4/9. The chain is 1-(5-phosphoribosyl)-5-[(5-phosphoribosylamino)methylideneamino] imidazole-4-carboxamide isomerase from Serratia proteamaculans (strain 568).